Reading from the N-terminus, the 443-residue chain is Signal recognition particle 54 kDa protein (443 aa).

GTP contacts are provided by residues 107-114 (GVQGSGKT), 189-193 (DTAGR), and 247-250 (TKLD).

The protein belongs to the GTP-binding SRP family. SRP54 subfamily. Part of the signal recognition particle protein translocation system, which is composed of SRP and FtsY. Archaeal SRP consists of a 7S RNA molecule of 300 nucleotides and two protein subunits: SRP54 and SRP19.

The protein localises to the cytoplasm. The enzyme catalyses GTP + H2O = GDP + phosphate + H(+). Its function is as follows. Involved in targeting and insertion of nascent membrane proteins into the cytoplasmic membrane. Binds to the hydrophobic signal sequence of the ribosome-nascent chain (RNC) as it emerges from the ribosomes. The SRP-RNC complex is then targeted to the cytoplasmic membrane where it interacts with the SRP receptor FtsY. The chain is Signal recognition particle 54 kDa protein from Pyrococcus abyssi (strain GE5 / Orsay).